The primary structure comprises 398 residues: Lysophospholipid transporter LplT (398 aa).

The next 12 membrane-spanning stretches (helical) occupy residues 16–36 (MIAV…LLFA), 53–73 (ILQM…GQVA), 91–111 (AGAL…LVGV), 139–159 (LMEA…GILA), 163–183 (IVAA…ANLY), 195–213 (SWTP…VVLW), 227–247 (LFWG…PVAL), 253–273 (ATPT…AGAA), 286–306 (MPAG…TTLF), 310–330 (ALLL…NALL), 344–364 (IAVQ…LYSL), and 372–392 (VVGV…ALWL).

This sequence belongs to the major facilitator superfamily. LplT (TC 2.A.1.42) family.

It is found in the cell inner membrane. Functionally, catalyzes the facilitated diffusion of 2-acyl-glycero-3-phosphoethanolamine (2-acyl-GPE) into the cell. The sequence is that of Lysophospholipid transporter LplT from Serratia proteamaculans (strain 568).